Consider the following 191-residue polypeptide: Fe/S biogenesis protein NfuA (191 aa).

[4Fe-4S] cluster contacts are provided by C149 and C152.

This sequence belongs to the NfuA family. Homodimer. [4Fe-4S] cluster serves as cofactor.

Functionally, involved in iron-sulfur cluster biogenesis. Binds a 4Fe-4S cluster, can transfer this cluster to apoproteins, and thereby intervenes in the maturation of Fe/S proteins. Could also act as a scaffold/chaperone for damaged Fe/S proteins. In Yersinia enterocolitica serotype O:8 / biotype 1B (strain NCTC 13174 / 8081), this protein is Fe/S biogenesis protein NfuA.